Here is a 155-residue protein sequence, read N- to C-terminus: MLTLSGWITTQVPPSSRAAADAKAARTGTAEQAEDPAAGTDAADQHVQLSQAGRELAATMGVPVEEEDEDIPQELRPMVKMIRELKKKIEEKLRELQEAMRSSDPGAKEARVPELQKELQQLNSALQTATAAMASAIKEMGISDPALIMKVMGSR.

Polar residues predominate over residues 1–14; the sequence is MLTLSGWITTQVPP. The segment at 1–44 is disordered; the sequence is MLTLSGWITTQVPPSSRAAADAKAARTGTAEQAEDPAAGTDAAD. Residues 17–30 show a composition bias toward low complexity; sequence RAAADAKAARTGTA.

This is an uncharacterized protein from Pseudomonas aeruginosa (strain ATCC 15692 / DSM 22644 / CIP 104116 / JCM 14847 / LMG 12228 / 1C / PRS 101 / PAO1).